The following is a 115-amino-acid chain: uncharacterized protein (115 aa).

3 helical membrane-spanning segments follow: residues threonine 7–aspartate 27, tyrosine 40–alanine 60, and isoleucine 72–leucine 92.

Its subcellular location is the cell membrane. This is an uncharacterized protein from Haemophilus influenzae (strain ATCC 51907 / DSM 11121 / KW20 / Rd).